We begin with the raw amino-acid sequence, 458 residues long: MNMLIVGRVVASVGGSGLQTLCFVIGCTMVGERSRPLVISILSCAFAVAAIVGPIIGGAFTTHVTWRWCFYINLPIGGLAIIMFLLTYKAENKGILQQIKDAIGTISSFTFSKFRHQVNFKRLMNGIIFKFDFFGFALCSAGLVLFLLGLTFGGNKYSWNSGQVIAYLVLGVLLFIFSLVYDFFLFDKFNPEPDNISYRPLLLRRLVAKPAIIIINMVTFLLCTGYNGQMIYSVQFFQLIFASSAWKAGLHLIPIVITNVIAAIASGVITKKLGLVKPLLIFGGVLGVIGAGLMTLMTNTSTKSTQIGVLLLPGFSLGFALQASLMSAQLQITKDRPEAAMDFIEVTAFNTFMKSLGTTLGGVLSTTVFSASFHNKVSRAHLEPYEGKTVDDMILYRLQNYDGSHSTIGNILSDSIKNVFWMDLGFYALGFLFCSFSSNKKLIIPKKDETPEDNLEDK.

At M1–V9 the chain is on the cytoplasmic side. A helical transmembrane segment spans residues V10 to V30. The Vacuolar portion of the chain corresponds to G31–P36. A helical membrane pass occupies residues L37–G57. The Cytoplasmic portion of the chain corresponds to G58 to R67. Residues W68–Y88 form a helical membrane-spanning segment. Residues K89 to D132 lie on the Vacuolar side of the membrane. Residues F133–G153 form a helical membrane-spanning segment. The Cytoplasmic segment spans residues G154–Q163. A helical membrane pass occupies residues V164–F184. Topologically, residues L185–R205 are vacuolar. N195 carries N-linked (GlcNAc...) asparagine glycosylation. The chain crosses the membrane as a helical span at residues L206–Y226. Topologically, residues N227–A248 are cytoplasmic. Residues G249–I269 form a helical membrane-spanning segment. At T270 to K277 the chain is on the vacuolar side. A helical membrane pass occupies residues P278–T298. The Cytoplasmic portion of the chain corresponds to N299 to Q306. A helical membrane pass occupies residues I307–S327. Residues A328 to S415 lie on the Vacuolar side of the membrane. Residues I416–F436 traverse the membrane as a helical segment. Topologically, residues S437 to K458 are cytoplasmic.

Belongs to the major facilitator superfamily.

The protein localises to the vacuole membrane. In terms of biological role, transporter required for vacuolar uptake of histidine and lysine. This is Vacuolar basic amino acid transporter 3 (VBA3) from Saccharomyces cerevisiae (strain ATCC 204508 / S288c) (Baker's yeast).